The sequence spans 788 residues: Choline transporter-like protein 1 (788 aa).

Residues 98 to 118 form a helical membrane-spanning segment; it reads FLFFVFLCGWVVVASLGIMWG. Asparagine 276 is a glycosylation site (N-linked (GlcNAc...) asparagine). A run of 4 helical transmembrane segments spans residues 329–349, 352–372, 409–429, and 458–478; these read WWQT…WTVI, LLGS…LGFG, FVVA…ILFI, and LFPF…AIWL. An N-linked (GlcNAc...) asparagine glycan is attached at asparagine 497. A run of 5 helical transmembrane segments spans residues 531–551, 583–603, 620–640, 679–699, and 718–738; these read LFAF…ALAG, LGSI…RVML, WFLM…KFLT, AGIL…ILSF, and YYFV…DLFF.

The protein belongs to the CTL (choline transporter-like) family.

It localises to the membrane. The polypeptide is Choline transporter-like protein 1 (chtl-1) (Caenorhabditis briggsae).